The following is a 778-amino-acid chain: Ribosome biogenesis protein BOP1 homolog (778 aa).

Residues 1-10 (MAKKQDRKRK) show a composition bias toward basic residues. The segment at 1 to 152 (MAKKQDRKRK…DSDTSDEEDI (152 aa)) is disordered. Acidic residues-rich tracts occupy residues 44–53 (EDSTDDEGID), 60–72 (SSED…DEEG), and 84–105 (SSDE…DEEE). The segment covering 114–124 (TTSSKAETNNE) has biased composition (polar residues). Acidic residues predominate over residues 142–151 (EDSDTSDEED). WD repeat units lie at residues 438-479 (GHTD…RTIE), 481-519 (EDVV…KLLI), 564-606 (NHFK…SQIP), 609-647 (KSKG…LIKK), 650-689 (TNSK…KPYQ), 693-732 (LHRN…DLLQ), and 748-778 (RDDF…RLYT).

This sequence belongs to the WD repeat BOP1/ERB1 family.

It localises to the nucleus. The protein localises to the nucleolus. It is found in the nucleoplasm. In terms of biological role, required for maturation of ribosomal RNAs and formation of the large ribosomal subunit. The sequence is that of Ribosome biogenesis protein BOP1 homolog from Drosophila willistoni (Fruit fly).